The following is a 35-amino-acid chain: Riboflavin-binding protein (35 aa).

A disulfide bridge links C5 with C32.

Belongs to the folate receptor family.

Its function is as follows. Required for the transport of riboflavin to the developing oocyte. This is Riboflavin-binding protein from Struthio camelus (Common ostrich).